We begin with the raw amino-acid sequence, 166 residues long: Putative 4-hydroxy-4-methyl-2-oxoglutarate aldolase 1 (166 aa).

Ala-2 is modified (N-acetylalanine). Substrate contacts are provided by residues 81–84 (GGNP) and Arg-103. An a divalent metal cation-binding site is contributed by Asp-104.

Belongs to the class II aldolase/RraA-like family. In terms of assembly, homotrimer. A divalent metal cation serves as cofactor.

The enzyme catalyses 4-hydroxy-4-methyl-2-oxoglutarate = 2 pyruvate. It catalyses the reaction oxaloacetate + H(+) = pyruvate + CO2. Functionally, catalyzes the aldol cleavage of 4-hydroxy-4-methyl-2-oxoglutarate (HMG) into 2 molecules of pyruvate. Also contains a secondary oxaloacetate (OAA) decarboxylase activity due to the common pyruvate enolate transition state formed following C-C bond cleavage in the retro-aldol and decarboxylation reactions. This Arabidopsis thaliana (Mouse-ear cress) protein is Putative 4-hydroxy-4-methyl-2-oxoglutarate aldolase 1.